The chain runs to 99 residues: U8-agatoxin-Ao1a (99 aa).

A signal peptide spans 1–19 (MKSLLFVTIAVYFVAQAVT). A propeptide spanning residues 20 to 45 (ANLLSNFLGSSLIDDDKGNMHKLYKR) is cleaved from the precursor.

This sequence belongs to the neurotoxin 02 (plectoxin) family. Contains 5 disulfide bonds. Expressed by the venom gland.

The protein resides in the secreted. In Agelena orientalis (Funnel-web spider), this protein is U8-agatoxin-Ao1a.